The chain runs to 497 residues: Probable gamma-aminobutyrate transaminase 2, mitochondrial (497 aa).

Residues 1-37 (MNLIKHAAFAASFQGETDCTSHASARKFSTSGSSPLL) constitute a mitochondrion transit peptide. Residue 153–154 (GS) coordinates pyridoxal 5'-phosphate. A substrate-binding site is contributed by Y186. D293 contacts pyridoxal 5'-phosphate. K322 contributes to the substrate binding site. Residue K322 is modified to N6-(pyridoxal phosphate)lysine.

This sequence belongs to the class-III pyridoxal-phosphate-dependent aminotransferase family.

It localises to the mitochondrion. It catalyses the reaction 4-aminobutanoate + pyruvate = succinate semialdehyde + L-alanine. The enzyme catalyses 4-aminobutanoate + glyoxylate = succinate semialdehyde + glycine. Functionally, transaminase that degrades gamma-amino butyric acid (GABA). The protein is Probable gamma-aminobutyrate transaminase 2, mitochondrial of Oryza sativa subsp. indica (Rice).